A 284-amino-acid chain; its full sequence is Urease accessory protein UreD (284 aa).

The disordered stretch occupies residues 1-28 (MQSEQQAIGASGCEDAQQPVRQQRARGR).

Belongs to the UreD family. In terms of assembly, ureD, UreF and UreG form a complex that acts as a GTP-hydrolysis-dependent molecular chaperone, activating the urease apoprotein by helping to assemble the nickel containing metallocenter of UreC. The UreE protein probably delivers the nickel.

The protein localises to the cytoplasm. In terms of biological role, required for maturation of urease via the functional incorporation of the urease nickel metallocenter. The protein is Urease accessory protein UreD of Agrobacterium fabrum (strain C58 / ATCC 33970) (Agrobacterium tumefaciens (strain C58)).